Consider the following 175-residue polypeptide: Crossover junction endodeoxyribonuclease RuvC (175 aa).

Residues Asp7, Glu68, and Asp141 contribute to the active site. Asp7, Glu68, and Asp141 together coordinate Mg(2+).

Belongs to the RuvC family. Homodimer which binds Holliday junction (HJ) DNA. The HJ becomes 2-fold symmetrical on binding to RuvC with unstacked arms; it has a different conformation from HJ DNA in complex with RuvA. In the full resolvosome a probable DNA-RuvA(4)-RuvB(12)-RuvC(2) complex forms which resolves the HJ. The cofactor is Mg(2+).

It is found in the cytoplasm. It carries out the reaction Endonucleolytic cleavage at a junction such as a reciprocal single-stranded crossover between two homologous DNA duplexes (Holliday junction).. Functionally, the RuvA-RuvB-RuvC complex processes Holliday junction (HJ) DNA during genetic recombination and DNA repair. Endonuclease that resolves HJ intermediates. Cleaves cruciform DNA by making single-stranded nicks across the HJ at symmetrical positions within the homologous arms, yielding a 5'-phosphate and a 3'-hydroxyl group; requires a central core of homology in the junction. The consensus cleavage sequence is 5'-(A/T)TT(C/G)-3'. Cleavage occurs on the 3'-side of the TT dinucleotide at the point of strand exchange. HJ branch migration catalyzed by RuvA-RuvB allows RuvC to scan DNA until it finds its consensus sequence, where it cleaves and resolves the cruciform DNA. The sequence is that of Crossover junction endodeoxyribonuclease RuvC from Salinispora arenicola (strain CNS-205).